A 373-amino-acid polypeptide reads, in one-letter code: D-alanine--D-alanine ligase (373 aa).

The 208-residue stretch at 156–363 (KKLLAADGLP…YPTLLATMIE (208 aa)) folds into the ATP-grasp domain. Position 184-239 (184-239 (CERLGLPVFVKPARGGSSIGVSRVSSWDQLPAAVARARRHDPKVIVEAAISGRELE)) interacts with ATP. Residues D318, E330, and N332 each coordinate Mg(2+).

The protein belongs to the D-alanine--D-alanine ligase family. The cofactor is Mg(2+). Mn(2+) serves as cofactor.

It is found in the cytoplasm. It catalyses the reaction 2 D-alanine + ATP = D-alanyl-D-alanine + ADP + phosphate + H(+). The protein operates within cell wall biogenesis; peptidoglycan biosynthesis. Cell wall formation. The polypeptide is D-alanine--D-alanine ligase (Mycobacterium bovis (strain BCG / Pasteur 1173P2)).